Reading from the N-terminus, the 156-residue chain is Small ribosomal subunit protein uS7 (156 aa).

Belongs to the universal ribosomal protein uS7 family. Part of the 30S ribosomal subunit. Contacts proteins S9 and S11.

Its function is as follows. One of the primary rRNA binding proteins, it binds directly to 16S rRNA where it nucleates assembly of the head domain of the 30S subunit. Is located at the subunit interface close to the decoding center, probably blocks exit of the E-site tRNA. The polypeptide is Small ribosomal subunit protein uS7 (Syntrophobacter fumaroxidans (strain DSM 10017 / MPOB)).